The chain runs to 490 residues: Cysteine desulfurase, mitochondrial (490 aa).

Pyridoxal 5'-phosphate contacts are provided by residues 161-162 (AT), Asn-241, Gln-269, and 289-291 (SSH). At Lys-292 the chain carries N6-(pyridoxal phosphate)lysine. Position 329 (Thr-329) interacts with pyridoxal 5'-phosphate. Cys-414 (cysteine persulfide intermediate) is an active-site residue. Cys-414 lines the [2Fe-2S] cluster pocket.

Belongs to the class-V pyridoxal-phosphate-dependent aminotransferase family. NifS/IscS subfamily. Pyridoxal 5'-phosphate serves as cofactor.

The protein localises to the mitochondrion. The enzyme catalyses (sulfur carrier)-H + L-cysteine = (sulfur carrier)-SH + L-alanine. In terms of biological role, catalyzes the removal of elemental sulfur from cysteine to produce alanine. It supplies the inorganic sulfur for iron-sulfur (Fe-S) clusters. Plays a role in both tRNA-processing and mitochondrial metabolism. Involved in the 2-thio-modification of both 5-carboxymethylaminomethyl-2-thiouridine in mitochondrial tRNAs and 5-methoxycarbonylmethyl-2-thiouridine (mcm5s2U) in cytoplasmic tRNAs. This chain is Cysteine desulfurase, mitochondrial, found in Eremothecium gossypii (strain ATCC 10895 / CBS 109.51 / FGSC 9923 / NRRL Y-1056) (Yeast).